The primary structure comprises 208 residues: Mediator of RNA polymerase II transcription subunit 18 (208 aa).

It belongs to the Mediator complex subunit 18 family. Component of the Mediator complex.

Its subcellular location is the nucleus. Component of the Mediator complex, a coactivator involved in the regulated transcription of nearly all RNA polymerase II-dependent genes. Mediator functions as a bridge to convey information from gene-specific regulatory proteins to the basal RNA polymerase II transcription machinery. Mediator is recruited to promoters by direct interactions with regulatory proteins and serves as a scaffold for the assembly of a functional preinitiation complex with RNA polymerase II and the general transcription factors. The protein is Mediator of RNA polymerase II transcription subunit 18 (med18) of Xenopus laevis (African clawed frog).